A 175-amino-acid chain; its full sequence is Anterior gradient protein 2 homolog (175 aa).

An N-terminal signal peptide occupies residues 1 to 20 (MEKIPVSAFLLLVALSYTLA). A required to promote cell adhesion region spans residues 21–40 (RDTTVKPGAKKDTKDSRPKL). 2 short sequence motifs (homodimer stabilization; interchain) span residues 45–54 (SRGWGDQLIW) and 60–67 (EALYKSKT).

It belongs to the AGR family. Monomer and homodimer. Interacts with LYPD3 and DAG1 (alphaDAG1). Interacts with MUC2; disulfide-linked. Expressed strongly in trachea, lung, stomach, colon, prostate and small intestine. Expressed weakly in pituitary gland, salivary gland, mammary gland, bladder, appendix, ovary, fetal lung, uterus, pancreas, kidney, fetal kidney, testis, placenta, thyroid gland and in estrogen receptor (ER)-positive breast cancer cell lines.

Its subcellular location is the secreted. The protein localises to the endoplasmic reticulum. Functionally, required for MUC2 post-transcriptional synthesis and secretion. May play a role in the production of mucus by intestinal cells. Proto-oncogene that may play a role in cell migration, cell differentiation and cell growth. Promotes cell adhesion. The sequence is that of Anterior gradient protein 2 homolog (AGR2) from Homo sapiens (Human).